Consider the following 371-residue polypeptide: 4-hydroxy-3-methylbut-2-en-1-yl diphosphate synthase (flavodoxin) (371 aa).

Positions 269, 272, 304, and 311 each coordinate [4Fe-4S] cluster.

This sequence belongs to the IspG family. The cofactor is [4Fe-4S] cluster.

The enzyme catalyses (2E)-4-hydroxy-3-methylbut-2-enyl diphosphate + oxidized [flavodoxin] + H2O + 2 H(+) = 2-C-methyl-D-erythritol 2,4-cyclic diphosphate + reduced [flavodoxin]. It participates in isoprenoid biosynthesis; isopentenyl diphosphate biosynthesis via DXP pathway; isopentenyl diphosphate from 1-deoxy-D-xylulose 5-phosphate: step 5/6. In terms of biological role, converts 2C-methyl-D-erythritol 2,4-cyclodiphosphate (ME-2,4cPP) into 1-hydroxy-2-methyl-2-(E)-butenyl 4-diphosphate. This Acinetobacter baumannii (strain AB307-0294) protein is 4-hydroxy-3-methylbut-2-en-1-yl diphosphate synthase (flavodoxin).